A 420-amino-acid chain; its full sequence is MSIKGDSPSSTNASSSPKSTYSIQSDDKANLGSGNVDIRTDNSQQDSNNRRDIVVVTRVASEETLESQSSTSSMGIRPESSFNYEDASNQARVEMNNRVHGSNMNTINKYYPVRFPKNNERQLSDTNNLNEKVQGTHTVQSSTQEDKILDGDTSNSQVTPSLNIAEFPTDKLLKMLTALLTKIIKSNDRTAATNPSLTQEIENGRCLALSDNEKKYLSPVLGFRGKHVPQIGLDQYFQRIQKYCPTTNDVFLSLLVYFDRISKRCNSVTTTPKTNTAKHESPSNESSLDKANRGADKMSACNSNENNENDDSDDENTGVQRDSRAHPQMFVMDSHNIHRLIIAGITVSTKFLSDFFYSNSRYSRVGGISLQELNHLELQFLVLCDFELLISVNELQRYADLLYRFWNNAKAQSQALVTGM.

Disordered stretches follow at residues 1–82 (MSIK…ESSF), 134–155 (QGTH…DTSN), and 268–321 (VTTT…GVQR). The segment covering 7–22 (SPSSTNASSSPKSTYS) has biased composition (low complexity). Serine 61 carries the post-translational modification Phosphoserine. Polar residues predominate over residues 134 to 143 (QGTHTVQSST). Residues 277–296 (AKHESPSNESSLDKANRGAD) are compositionally biased toward basic and acidic residues. 2 positions are modified to phosphoserine: serine 281 and serine 312. The span at 307–316 (NENDDSDDEN) shows a compositional bias: acidic residues. Threonine 317 carries the phosphothreonine modification.

This sequence belongs to the cyclin family. PHO80 subfamily. In terms of assembly, forms a cyclin-CDK complex with PHO85. Interacts with the substrate protein YJL084C. Interacts with elongin-C, which stabilizes PCL6. Interacts with the CDK inhibitor (CKI) PHO81.

It is found in the cytoplasm. The protein localises to the nucleus. Its function is as follows. Cyclin partner of the cyclin-dependent kinase (CDK) PHO85. Together with cyclin PCL7, controls glycogen phosphorylase and glycogen synthase activities in response to nutrient availablility. The PCL6-PHO85 cyclin-CDK holoenzyme has GLC8 kinase activity and phosphorylates and inactivates the phosphatase PP1-2 inhibitor GLC8, causing activation of PP1-2, which then dephosphorylates and activates glycogen phosphorylase. PCL6-PHO85 also phosphorylates YJL084C. The sequence is that of PHO85 cyclin-6 (PCL6) from Saccharomyces cerevisiae (strain ATCC 204508 / S288c) (Baker's yeast).